The sequence spans 271 residues: Serine protease SP24D (271 aa).

Positions 1 to 22 (MTLADRVPLALAALAYLALVSG) are cleaved as a signal peptide. The propeptide at 23–49 (VRFHLSEQNDVLPGGSQARRPFFQGAR) is activation peptide. The Peptidase S1 domain occupies 50 to 269 (IVGGSVASEG…FVTWIQTTMR (220 aa)). Cysteines 75 and 91 form a disulfide. Residues histidine 90 and aspartate 136 each act as charge relay system in the active site. Cystine bridges form between cysteine 199/cysteine 211 and cysteine 221/cysteine 246. Catalysis depends on serine 225, which acts as the Charge relay system.

This sequence belongs to the peptidase S1 family. As to expression, highest level of adult expression is in the thorax.

The polypeptide is Serine protease SP24D (Sp24D) (Anopheles gambiae (African malaria mosquito)).